The sequence spans 210 residues: GEM-like protein 7 (210 aa).

Residues 88-166 (KIYKRLFKVC…CKINGVNQSQ (79 aa)) enclose the GRAM domain.

Belongs to the GEM family.

This chain is GEM-like protein 7, found in Arabidopsis thaliana (Mouse-ear cress).